The sequence spans 128 residues: Fluoride-specific ion channel FluC (128 aa).

4 consecutive transmembrane segments (helical) span residues 4-24, 37-57, 63-83, and 99-119; these read LILA…RYLI, PYGT…IMDI, LISG…LTTF, and ILMG…GVII. Na(+) contacts are provided by glycine 78 and threonine 81.

This sequence belongs to the fluoride channel Fluc/FEX (TC 1.A.43) family.

Its subcellular location is the cell membrane. The catalysed reaction is fluoride(in) = fluoride(out). Na(+) is not transported, but it plays an essential structural role and its presence is essential for fluoride channel function. Fluoride-specific ion channel. Important for reducing fluoride concentration in the cell, thus reducing its toxicity. This is Fluoride-specific ion channel FluC from Clostridium novyi (strain NT).